We begin with the raw amino-acid sequence, 270 residues long: Tetracenomycin polyketide synthesis O-methyltransferase TcmP (270 aa).

Its pathway is antibiotic biosynthesis; tetracenomycin C biosynthesis. O-methyltransferase that catalyzes the methylation of the C-9 carboxy group of tetracenomycin E (TCM E) to yield TCM A2. Catalyzes as well the following side reactions: methylation of 8-O-methyl-TCM D3 to 9-carboxymethyl-8-O-methyl-TCM D3; and of TCM B3 to 9-carboxymethyl-TCM B3. The polypeptide is Tetracenomycin polyketide synthesis O-methyltransferase TcmP (tcmP) (Streptomyces glaucescens).